The following is a 210-amino-acid chain: Glutathione S-transferase P 1 (210 aa).

The region spanning 1–80 (PEYTIIYFNA…LLARNHDLYG (80 aa)) is the GST N-terminal domain. Glutathione-binding positions include Tyr-7, Arg-13, Trp-38, Lys-44, 51–52 (QL), and 64–65 (QS). A GST C-terminal domain is found at 82 to 203 (NPREASLIDM…SSDAHKKRPI (122 aa)).

It belongs to the GST superfamily. Pi family. As to quaternary structure, homodimer.

The protein resides in the cytoplasm. It localises to the mitochondrion. Its subcellular location is the nucleus. The catalysed reaction is RX + glutathione = an S-substituted glutathione + a halide anion + H(+). Conjugation of reduced glutathione to a wide number of exogenous and endogenous hydrophobic electrophiles. This Bufo bufo (European toad) protein is Glutathione S-transferase P 1.